The sequence spans 198 residues: MPNWRDQYLSGIKDAELNNPVNMELVQTCSQMADRISALEAEKNGLETLVTTNGKTTARPTEPSTNDPAVAQLKQDLAEALRSKGVAEKRLRSSEEELLQLRSKHKTNTRSIRDLTADKNSLTTRLKDREYELREKRKFIEQVQDEMIALNLQMSMAEKERDKVKKENKELVDRWMKRMAQEAEAMNLANEPIFKKGR.

A coiled-coil region spans residues 24 to 177 (ELVQTCSQMA…NKELVDRWMK (154 aa)).

The protein belongs to the ATG16 family. As to quaternary structure, homodimer. Part of the ATG5-ATG12/ATG16 complex. Several units of each may be present in this complex. Interacts directly with ATG12.

Its subcellular location is the preautophagosomal structure membrane. Functionally, stabilizes the ATG5-ATG12 conjugate. The ATG5-ATG12/ATG16 complex is required for efficient promotion of ATG8-conjugation to phosphatidylethanolamine and ATG8 localization to the pre-autophagosomal structure (PAS). Also recruits ATG3 to the PAS. Involved in endoplasmic reticulum-specific autophagic process and is essential for the survival of cells subjected to severe ER stress. Autophagy is required for proper vegetative growth, asexual/sexual reproduction, and full virulence. Autophagy is particularly involved in the biosynthesis of deoxynivalenol (DON), an important virulence determinant. This is Autophagy-related protein 16 from Gibberella zeae (strain ATCC MYA-4620 / CBS 123657 / FGSC 9075 / NRRL 31084 / PH-1) (Wheat head blight fungus).